Consider the following 271-residue polypeptide: Protein PXR1 (271 aa).

Residues 25 to 72 (TSRFGHQFLEKFGWKPGMGLGLYPMNSNTSHIKVSIKDDNVGLGAKLK) enclose the G-patch domain. A disordered region spans residues 147–239 (SNAKKRKREG…SASNIPDAVN (93 aa)). The span at 157–168 (DDSEDEDDDDKE) shows a compositional bias: acidic residues. Residues 175-203 (KKHKKHKKHKKDKKKDKKDKKEHKKHKKE) show a composition bias toward basic residues. Residues 204–221 (EKRLKKEKRAEKTKETKK) are compositionally biased toward basic and acidic residues. The residue at position 230 (Ser230) is a Phosphoserine.

The protein belongs to the PINX1 family. In terms of assembly, interacts with EST2.

It is found in the nucleus. The protein localises to the nucleolus. Involved in rRNA-processing at A0, A1 and A2 sites through its action in U18 and U24 snoRNA 3'-end final trimming. Negative regulator of telomerase throughX competition for binding to EST2 with TLC1. The protein is Protein PXR1 (PXR1) of Saccharomyces cerevisiae (strain YJM789) (Baker's yeast).